We begin with the raw amino-acid sequence, 91 residues long: Large ribosomal subunit protein uL22 (91 aa).

Belongs to the universal ribosomal protein uL22 family. Part of the 50S ribosomal subunit.

Its function is as follows. This protein binds specifically to 23S rRNA; its binding is stimulated by other ribosomal proteins, e.g. L4, L17, and L20. It is important during the early stages of 50S assembly. It makes multiple contacts with different domains of the 23S rRNA in the assembled 50S subunit and ribosome. Functionally, the globular domain of the protein is located near the polypeptide exit tunnel on the outside of the subunit, while an extended beta-hairpin is found that lines the wall of the exit tunnel in the center of the 70S ribosome. The chain is Large ribosomal subunit protein uL22 (rplV) from Clover yellow edge phytoplasma.